A 262-amino-acid chain; its full sequence is MTQPSKTTKLTKDEVDRLISDYQTKQDEQAQETLVRVYTNLVDMLAKKYSKGKSFHEDLRQVGMIGLLGAIKRYDPVVGKSFEAFAIPTIIGEIKRFLRDKTWSVHVPRRIKELGPRIKMAVDQLTTETQRSPKVEEIAEFLDVSEEEVLETMEMGKSYQALSVDHSIEADSDGSTVTILDIVGSQEDGYERVNQQLMLQSVLHVLSDREKQIIDLTYIQNKSQKETGDILGISQMHVSRLQRKAVKKLREALIEDPSMELM.

A Polymerase core binding motif is present at residues 58–71; the sequence is DLRQVGMIGLLGAI. Positions 224-243 form a DNA-binding region, H-T-H motif; that stretch reads QKETGDILGISQMHVSRLQR.

It belongs to the sigma-70 factor family. SigB subfamily. As to quaternary structure, interacts transiently with the RNAP core.

Its function is as follows. Sigma factors are initiation factors that promote the attachment of RNA polymerase (RNAP) to specific initiation sites and are then released. Sigma B is not essential for sporulation; rather it is required for maximal expression of ctc and csbA which are transcribed in the early stationary phase under conditions inimical to sporulation. May play a role in the ability of the bacterium to adapt to various stresses but is not essential for its survival under these conditions. Positively regulates expression of its own operon. The second most abundant sigma factor, it associates with RNAP core under all growth phases. This chain is RNA polymerase sigma-B factor (sigB), found in Bacillus subtilis (strain 168).